The following is an 804-amino-acid chain: Phenylalanine--tRNA ligase beta subunit (804 aa).

A tRNA-binding domain is found at 40 to 155 (GEGIKGVVIG…GDAETGADAL (116 aa)). The B5 domain maps to 409 to 484 (IKENVIRLSV…RLYGYDNIPS (76 aa)). Residues Asp462, Asp468, Glu471, and Glu472 each contribute to the Mg(2+) site. One can recognise an FDX-ACB domain in the interval 710–803 (PKYPSVTRDI…LEDKYQAVLR (94 aa)).

The protein belongs to the phenylalanyl-tRNA synthetase beta subunit family. Type 1 subfamily. In terms of assembly, tetramer of two alpha and two beta subunits. Requires Mg(2+) as cofactor.

It is found in the cytoplasm. The catalysed reaction is tRNA(Phe) + L-phenylalanine + ATP = L-phenylalanyl-tRNA(Phe) + AMP + diphosphate + H(+). The protein is Phenylalanine--tRNA ligase beta subunit of Bacillus licheniformis (strain ATCC 14580 / DSM 13 / JCM 2505 / CCUG 7422 / NBRC 12200 / NCIMB 9375 / NCTC 10341 / NRRL NRS-1264 / Gibson 46).